The sequence spans 397 residues: L-cysteine desulfidase (397 aa).

Cys23 acts as the Proton acceptor in catalysis. [4Fe-4S] cluster-binding residues include Cys288, Cys330, and Cys337.

It belongs to the L-cysteine desulfidase family. Homotrimer. The cofactor is [4Fe-4S] cluster.

It catalyses the reaction L-cysteine + H2O = hydrogen sulfide + pyruvate + NH4(+) + H(+). Functionally, catalyzes the cleavage of L-cysteine to form 2-aminoprop-2-enoate and sulfide. The former then spontaneously hydrolyzes to pyruvate and NH(3). May be responsible for the production of sulfide required for the biosynthesis of iron-sulfur centers in this archaea. The polypeptide is L-cysteine desulfidase (Methanococcus maripaludis (strain C7 / ATCC BAA-1331)).